We begin with the raw amino-acid sequence, 205 residues long: Recombination protein RecR (205 aa).

A C4-type zinc finger spans residues 59-74 (CSVCFHLSAEPVCEVC). A Toprim domain is found at 82-181 (GTLCVVADSR…KVTRIAFGLP (100 aa)).

Belongs to the RecR family.

Functionally, may play a role in DNA repair. It seems to be involved in an RecBC-independent recombinational process of DNA repair. It may act with RecF and RecO. This is Recombination protein RecR from Cyanothece sp. (strain PCC 7425 / ATCC 29141).